A 394-amino-acid polypeptide reads, in one-letter code: 1-deoxy-D-xylulose 5-phosphate reductoisomerase (394 aa).

Positions 6, 7, 8, 9, 32, and 124 each coordinate NADPH. Residue K125 coordinates 1-deoxy-D-xylulose 5-phosphate. E126 contributes to the NADPH binding site. Position 148 (D148) interacts with Mn(2+). 1-deoxy-D-xylulose 5-phosphate-binding residues include S149, E150, S174, and H197. E150 is a binding site for Mn(2+). Residue G203 participates in NADPH binding. S210, N215, K216, and E219 together coordinate 1-deoxy-D-xylulose 5-phosphate. E219 contributes to the Mn(2+) binding site.

It belongs to the DXR family. Requires Mg(2+) as cofactor. Mn(2+) is required as a cofactor.

It catalyses the reaction 2-C-methyl-D-erythritol 4-phosphate + NADP(+) = 1-deoxy-D-xylulose 5-phosphate + NADPH + H(+). The protein operates within isoprenoid biosynthesis; isopentenyl diphosphate biosynthesis via DXP pathway; isopentenyl diphosphate from 1-deoxy-D-xylulose 5-phosphate: step 1/6. Its function is as follows. Catalyzes the NADPH-dependent rearrangement and reduction of 1-deoxy-D-xylulose-5-phosphate (DXP) to 2-C-methyl-D-erythritol 4-phosphate (MEP). The protein is 1-deoxy-D-xylulose 5-phosphate reductoisomerase of Streptomyces avermitilis (strain ATCC 31267 / DSM 46492 / JCM 5070 / NBRC 14893 / NCIMB 12804 / NRRL 8165 / MA-4680).